The sequence spans 137 residues: Probable glycine cleavage system H protein 1 (137 aa).

The Lipoyl-binding domain occupies 31–113; sequence VAVIGITDYA…YGEGWIFKLK (83 aa). Residue lysine 72 is modified to N6-lipoyllysine.

Belongs to the GcvH family. The glycine cleavage system is composed of four proteins: P, T, L and H. (R)-lipoate is required as a cofactor.

Functionally, the glycine cleavage system catalyzes the degradation of glycine. The H protein shuttles the methylamine group of glycine from the P protein to the T protein. This is Probable glycine cleavage system H protein 1 from Saccharolobus solfataricus (strain ATCC 35092 / DSM 1617 / JCM 11322 / P2) (Sulfolobus solfataricus).